The sequence spans 938 residues: Isoleucine--tRNA ligase (938 aa).

Positions 61 to 71 match the 'HIGH' region motif; that stretch reads PYANGDIHLGT. E559 contacts L-isoleucyl-5'-AMP. Residues 601–605 carry the 'KMSKS' region motif; that stretch reads KMSKS. An ATP-binding site is contributed by K604. The Zn(2+) site is built by C904, C907, C923, and C926.

The protein belongs to the class-I aminoacyl-tRNA synthetase family. IleS type 1 subfamily. Monomer. Requires Zn(2+) as cofactor.

It localises to the cytoplasm. It catalyses the reaction tRNA(Ile) + L-isoleucine + ATP = L-isoleucyl-tRNA(Ile) + AMP + diphosphate. In terms of biological role, catalyzes the attachment of isoleucine to tRNA(Ile). As IleRS can inadvertently accommodate and process structurally similar amino acids such as valine, to avoid such errors it has two additional distinct tRNA(Ile)-dependent editing activities. One activity is designated as 'pretransfer' editing and involves the hydrolysis of activated Val-AMP. The other activity is designated 'posttransfer' editing and involves deacylation of mischarged Val-tRNA(Ile). In Symbiobacterium thermophilum (strain DSM 24528 / JCM 14929 / IAM 14863 / T), this protein is Isoleucine--tRNA ligase.